The sequence spans 543 residues: uncharacterized protein (543 aa).

Residues 1 to 59 form the TRAM domain; sequence MLKKNDIVEVEIVDLTHEGAGVAKVDGLVFFVENALPSEKILMRVLKVNKKIGFGKVEK. Residues glutamine 283, tyrosine 312, glutamate 333, and aspartate 381 each coordinate S-adenosyl-L-methionine. The active-site Nucleophile is cysteine 408.

This sequence belongs to the class I-like SAM-binding methyltransferase superfamily. RNA M5U methyltransferase family.

This is an uncharacterized protein from Streptococcus pneumoniae serotype 4 (strain ATCC BAA-334 / TIGR4).